The primary structure comprises 269 residues: MTPQQREEAAQSLYQAMQSGKPIAPLRDTFPDMNVDDAYAIQSINTQRRISLGRRVVGRKIGLTSVVVQQQLGVDEPDFGALFDDMSFGDAETIPLSILHQPKVEAEIGFVLGRDLDTEQPTHQEVLQAVDYVVPALEIVGSRIADWNIKFVDTVADNASSGVYVLGSTPISPRGLDLSLVGMCLSRRGEPVSTGAGAACLGTPLNAVVWLARTMSRLGKPLRAGELILSGALGPMVAVKPGDVFECHINGVGSVRTEFESNQMNGVAA.

Belongs to the hydratase/decarboxylase family. MhpD subfamily. The cofactor is a divalent metal cation.

The enzyme catalyses (S)-4-hydroxy-2-oxopentanoate = (2Z)-2-hydroxypenta-2,4-dienoate + H2O. It participates in aromatic compound metabolism; 3-phenylpropanoate degradation. Catalyzes the conversion of 2-hydroxypentadienoic acid (enolic form of 2-oxopent-4-enoate) to 4-hydroxy-2-ketopentanoic acid. The polypeptide is 2-keto-4-pentenoate hydratase (Paraburkholderia xenovorans (strain LB400)).